Here is a 157-residue protein sequence, read N- to C-terminus: Selenoprotein F (157 aa).

The signal sequence occupies residues 1 to 19; that stretch reads MSGEVYILWLLSLIQTLSA. Residue selenocysteine 84 is a non-standard amino acid, selenocysteine.

It belongs to the selenoprotein M/F family. Expressed in the brain, liver and retina. Localized to the retinal ganglion cell layer, the inner nuclear layer and the outer nuclear layer at both parr and smolt stages.

The protein resides in the endoplasmic reticulum lumen. Its function is as follows. May be involved in redox reactions associated with the formation of disulfide bonds. May contribute to the quality control of protein folding in the endoplasmic reticulum. May be involved in retinal development. The polypeptide is Selenoprotein F (Oncorhynchus mykiss (Rainbow trout)).